The primary structure comprises 119 residues: Large ribosomal subunit protein bL20 (119 aa).

Belongs to the bacterial ribosomal protein bL20 family.

In terms of biological role, binds directly to 23S ribosomal RNA and is necessary for the in vitro assembly process of the 50S ribosomal subunit. It is not involved in the protein synthesizing functions of that subunit. The sequence is that of Large ribosomal subunit protein bL20 from Coxiella burnetii (strain CbuK_Q154) (Coxiella burnetii (strain Q154)).